The chain runs to 492 residues: Glycylpeptide N-tetradecanoyltransferase 2 (492 aa).

Residues 1–77 (MAEDSESAAS…SASDSQEIKN (77 aa)) form a disordered region. The segment covering 15-32 (ELDDQDTCGIDGDNEEEN) has biased composition (acidic residues). Basic residues predominate over residues 46–57 (KKKKKKQKRKKE). Polar residues predominate over residues 61–72 (SGGTKSDSASDS). Residues His-111, Trp-116, Leu-244, Val-246, Ser-252, Arg-254, Val-255, and Ala-256 each contribute to the tetradecanoyl-CoA site.

This sequence belongs to the NMT family.

The protein resides in the cytoplasm. It is found in the membrane. The enzyme catalyses N-terminal glycyl-[protein] + tetradecanoyl-CoA = N-tetradecanoylglycyl-[protein] + CoA + H(+). It catalyses the reaction N-terminal glycyl-L-lysyl-[protein] + tetradecanoyl-CoA = N-terminal glycyl-(N(6)-tetradecanoyl)-L-lysyl-[protein] + CoA + H(+). Its function is as follows. Adds a myristoyl group to the N-terminal glycine residue of certain cellular and viral proteins. Also able to mediate N-terminal lysine myristoylation of proteins. In Danio rerio (Zebrafish), this protein is Glycylpeptide N-tetradecanoyltransferase 2.